Consider the following 412-residue polypeptide: DNA polymerase IV 2 (412 aa).

In terms of domain architecture, UmuC spans 7 to 192 (IFLVDMQSFY…LPVGSMFGVG (186 aa)). 2 residues coordinate Mg(2+): D11 and D107. E108 is a catalytic residue.

Belongs to the DNA polymerase type-Y family. Monomer. Mg(2+) is required as a cofactor.

The protein resides in the cytoplasm. It carries out the reaction DNA(n) + a 2'-deoxyribonucleoside 5'-triphosphate = DNA(n+1) + diphosphate. In terms of biological role, poorly processive, error-prone DNA polymerase involved in untargeted mutagenesis. Copies undamaged DNA at stalled replication forks, which arise in vivo from mismatched or misaligned primer ends. These misaligned primers can be extended by PolIV. Exhibits no 3'-5' exonuclease (proofreading) activity. May be involved in translesion synthesis (TSL), in conjunction with the beta clamp from PolIII. The protein is DNA polymerase IV 2 (dinB2) of Bacillus subtilis (strain 168).